Here is a 487-residue protein sequence, read N- to C-terminus: Malonate-semialdehyde dehydrogenase 3 (487 aa).

NAD(+)-binding residues include phenylalanine 154, lysine 178, glutamate 181, arginine 182, and serine 231. Cysteine 286 serves as the catalytic Nucleophile. Glutamate 386 serves as a coordination point for NAD(+).

This sequence belongs to the aldehyde dehydrogenase family. IolA subfamily. As to quaternary structure, homotetramer.

It catalyses the reaction 3-oxopropanoate + NAD(+) + CoA + H2O = hydrogencarbonate + acetyl-CoA + NADH + H(+). It carries out the reaction 2-methyl-3-oxopropanoate + NAD(+) + CoA + H2O = propanoyl-CoA + hydrogencarbonate + NADH + H(+). Its pathway is polyol metabolism; myo-inositol degradation into acetyl-CoA; acetyl-CoA from myo-inositol: step 7/7. In terms of biological role, catalyzes the oxidation of malonate semialdehyde (MSA) and methylmalonate semialdehyde (MMSA) into acetyl-CoA and propanoyl-CoA, respectively. Is involved in a myo-inositol catabolic pathway. Bicarbonate, and not CO2, is the end-product of the enzymatic reaction. This Bacillus cereus (strain ZK / E33L) protein is Malonate-semialdehyde dehydrogenase 3.